The following is a 1440-amino-acid chain: Bridge-like lipid transfer protein family member 3A (1440 aa).

One can recognise a Chorein N-terminal domain in the interval 3 to 95 (GIIKKQILKH…KVEVEMKTCE (93 aa)). Disordered stretches follow at residues 267-307 (SAHQ…NSSS), 430-456 (ADSL…FQPP), and 751-780 (KPSA…TEHD). The segment covering 287-307 (SAQQSWAQAFGGSQGNSNSSS) has biased composition (low complexity). Phosphoserine is present on residues serine 444, serine 446, serine 755, and serine 758. The stretch at 837 to 860 (ALLRLKEVLQRLQEQLTKDTESMT) forms a coiled coil. The disordered stretch occupies residues 891–1008 (VDADSAGSDS…ETAVNGQGEL (118 aa)). Positions 911–920 (SEDRELKSDA) are enriched in basic and acidic residues. A compositionally biased stretch (low complexity) spans 985 to 995 (ASSSPAALKPP). 3 positions are modified to phosphoserine: serine 988, serine 1103, and serine 1106. A disordered region spans residues 1106-1180 (SFDGVSLDSS…SPAANSSVSP (75 aa)). Residues 1134–1150 (LLESESGPESVPPGSLS) are compositionally biased toward low complexity. A compositionally biased stretch (polar residues) spans 1151–1180 (NVSDNAGVQGSPLVNNYGQGSPAANSSVSP). Residues 1401–1435 (KELPILQKELIETKQALANANQDKEKLLQEIRKYN) adopt a coiled-coil conformation.

Homodimer (Potential). Interacts with UHRF1.

Its subcellular location is the late endosome. Functionally, tube-forming lipid transport protein which probably mediates the transfer of lipids between membranes at organelle contact sites. May be involved in the retrograde traffic of vesicle clusters in the endocytic pathway to the Golgi complex. This Homo sapiens (Human) protein is Bridge-like lipid transfer protein family member 3A.